The sequence spans 316 residues: MSDISKASLPKAIFLMGPTASGKTALAIELRKILPVELISVDSALIYKGMDIGTAKPNAEELLAAPHRLLDIRDPSQAYSAADFRRDALAEMADITAAGRIPLLVGGTMLYFKALLEGLSPLPSADPEVRARIEQQAAEQGWESLHRQLQEIDPVAAARIHPNDPQRLSRALEVFFISGKTLTELTQTSGDALPYQVHQFAIAPASRELLHQRIEQRFHQMLASGFEAEVRALFARGDLHTDLPSIRCVGYRQMWSYLGGEISYDEMVYRGVCATRQLAKRQITWLRGWEGVHWLDSEKPEQARDEVLQVVGAIAG.

17 to 24 (GPTASGKT) is an ATP binding site. 19-24 (TASGKT) is a substrate binding site. 4 interaction with substrate tRNA regions span residues 42–45 (DSAL), 166–170 (QRLSR), 247–252 (RCVGYR), and 280–287 (KRQITWLR).

This sequence belongs to the IPP transferase family. Monomer. It depends on Mg(2+) as a cofactor.

The catalysed reaction is adenosine(37) in tRNA + dimethylallyl diphosphate = N(6)-dimethylallyladenosine(37) in tRNA + diphosphate. Catalyzes the transfer of a dimethylallyl group onto the adenine at position 37 in tRNAs that read codons beginning with uridine, leading to the formation of N6-(dimethylallyl)adenosine (i(6)A). The chain is tRNA dimethylallyltransferase from Escherichia coli O157:H7.